The following is a 245-amino-acid chain: Uridylate kinase (245 aa).

Position 14 to 17 (14 to 17) interacts with ATP; that stretch reads KLSG. A UMP-binding site is contributed by Gly-56. Gly-57 and Arg-61 together coordinate ATP. Residues Asp-76 and 137 to 144 contribute to the UMP site; that span reads TGLPFFTT. ATP-binding residues include Thr-164, Tyr-170, and Asp-173.

This sequence belongs to the UMP kinase family. In terms of assembly, homohexamer.

It is found in the cytoplasm. It catalyses the reaction UMP + ATP = UDP + ADP. It participates in pyrimidine metabolism; CTP biosynthesis via de novo pathway; UDP from UMP (UMPK route): step 1/1. With respect to regulation, inhibited by UTP. In terms of biological role, catalyzes the reversible phosphorylation of UMP to UDP. This chain is Uridylate kinase, found in Syntrophobacter fumaroxidans (strain DSM 10017 / MPOB).